Here is a 572-residue protein sequence, read N- to C-terminus: Proline--tRNA ligase (572 aa).

It belongs to the class-II aminoacyl-tRNA synthetase family. ProS type 1 subfamily. Homodimer.

The protein resides in the cytoplasm. It carries out the reaction tRNA(Pro) + L-proline + ATP = L-prolyl-tRNA(Pro) + AMP + diphosphate. Functionally, catalyzes the attachment of proline to tRNA(Pro) in a two-step reaction: proline is first activated by ATP to form Pro-AMP and then transferred to the acceptor end of tRNA(Pro). As ProRS can inadvertently accommodate and process non-cognate amino acids such as alanine and cysteine, to avoid such errors it has two additional distinct editing activities against alanine. One activity is designated as 'pretransfer' editing and involves the tRNA(Pro)-independent hydrolysis of activated Ala-AMP. The other activity is designated 'posttransfer' editing and involves deacylation of mischarged Ala-tRNA(Pro). The misacylated Cys-tRNA(Pro) is not edited by ProRS. The protein is Proline--tRNA ligase of Alteromonas mediterranea (strain DSM 17117 / CIP 110805 / LMG 28347 / Deep ecotype).